We begin with the raw amino-acid sequence, 91 residues long: Parbolysin P6 (91 aa).

3 disulfides stabilise this stretch: Cys-16–Cys-37, Cys-22–Cys-33, and Cys-47–Cys-60.

It belongs to the worm cytolysin family. In terms of tissue distribution, localized within the skin and proboscis and are most readily isolated from body mucus secretions.

It is found in the secreted. Functionally, cytolysin that shows hemolytic activity (on bovine erythrocytes, HC(50)=5.75 mg/ml). This hemolytic activity is completely inhibited by small unilamelar vesicles composed of PC/PG, PC/PI and PC/PS in 1:1 molar ratios (with at least 100 mg/ml concentration). This chain is Parbolysin P6, found in Parborlasia corrugatus (Antarctic nemertean worm).